A 244-amino-acid polypeptide reads, in one-letter code: tRNA pseudouridine synthase A (244 aa).

Catalysis depends on Asp-52, which acts as the Nucleophile. Substrate is bound at residue Tyr-110.

This sequence belongs to the tRNA pseudouridine synthase TruA family. As to quaternary structure, homodimer.

It carries out the reaction uridine(38/39/40) in tRNA = pseudouridine(38/39/40) in tRNA. In terms of biological role, formation of pseudouridine at positions 38, 39 and 40 in the anticodon stem and loop of transfer RNAs. In Caldicellulosiruptor bescii (strain ATCC BAA-1888 / DSM 6725 / KCTC 15123 / Z-1320) (Anaerocellum thermophilum), this protein is tRNA pseudouridine synthase A.